A 214-amino-acid chain; its full sequence is RNA pyrophosphohydrolase (214 aa).

A Nudix hydrolase domain is found at 6 to 149; it reads GFRPNVGIIL…KRDVYQLALT (144 aa). The short motif at 38-59 is the Nudix box element; it reads GGIKYGETPMQAMYRELHEETG.

Belongs to the Nudix hydrolase family. RppH subfamily. Requires a divalent metal cation as cofactor.

Its function is as follows. Accelerates the degradation of transcripts by removing pyrophosphate from the 5'-end of triphosphorylated RNA, leading to a more labile monophosphorylated state that can stimulate subsequent ribonuclease cleavage. The polypeptide is RNA pyrophosphohydrolase (Burkholderia cenocepacia (strain HI2424)).